The following is a 314-amino-acid chain: Flotillin-like protein FloA (314 aa).

A helical transmembrane segment spans residues 4–24 (IGPIIIAVLIIIFLIVFFTLV).

It belongs to the flotillin-like FloA family. In terms of assembly, homooligomerizes.

The protein resides in the cell membrane. It is found in the membrane raft. In terms of biological role, found in functional membrane microdomains (FMM) that may be equivalent to eukaryotic membrane rafts. FMMs are highly dynamic and increase in number as cells age. Flotillins are thought to be important factors in membrane fluidity. In Listeria innocua serovar 6a (strain ATCC BAA-680 / CLIP 11262), this protein is Flotillin-like protein FloA.